The sequence spans 432 residues: Gamma-glutamyl phosphate reductase (432 aa).

This sequence belongs to the gamma-glutamyl phosphate reductase family.

It is found in the cytoplasm. The catalysed reaction is L-glutamate 5-semialdehyde + phosphate + NADP(+) = L-glutamyl 5-phosphate + NADPH + H(+). Its pathway is amino-acid biosynthesis; L-proline biosynthesis; L-glutamate 5-semialdehyde from L-glutamate: step 2/2. Its function is as follows. Catalyzes the NADPH-dependent reduction of L-glutamate 5-phosphate into L-glutamate 5-semialdehyde and phosphate. The product spontaneously undergoes cyclization to form 1-pyrroline-5-carboxylate. The chain is Gamma-glutamyl phosphate reductase from Deinococcus radiodurans (strain ATCC 13939 / DSM 20539 / JCM 16871 / CCUG 27074 / LMG 4051 / NBRC 15346 / NCIMB 9279 / VKM B-1422 / R1).